The chain runs to 533 residues: Bifunctional purine biosynthesis protein PurH (533 aa).

In terms of domain architecture, MGS-like spans 1 to 148 (MDTPRPIKRA…KNHKDVTIVV (148 aa)).

The protein belongs to the PurH family.

It carries out the reaction (6R)-10-formyltetrahydrofolate + 5-amino-1-(5-phospho-beta-D-ribosyl)imidazole-4-carboxamide = 5-formamido-1-(5-phospho-D-ribosyl)imidazole-4-carboxamide + (6S)-5,6,7,8-tetrahydrofolate. The catalysed reaction is IMP + H2O = 5-formamido-1-(5-phospho-D-ribosyl)imidazole-4-carboxamide. It functions in the pathway purine metabolism; IMP biosynthesis via de novo pathway; 5-formamido-1-(5-phospho-D-ribosyl)imidazole-4-carboxamide from 5-amino-1-(5-phospho-D-ribosyl)imidazole-4-carboxamide (10-formyl THF route): step 1/1. Its pathway is purine metabolism; IMP biosynthesis via de novo pathway; IMP from 5-formamido-1-(5-phospho-D-ribosyl)imidazole-4-carboxamide: step 1/1. The chain is Bifunctional purine biosynthesis protein PurH from Colwellia psychrerythraea (strain 34H / ATCC BAA-681) (Vibrio psychroerythus).